We begin with the raw amino-acid sequence, 319 residues long: MIVVTGGAGFIGSNLVKQLNAQGRTDIVVIDDLTDGTKFVNLVDLTIADYMDKDEFQARIVSGDEFEEWDDGIEVIFHEGACSATTEWNGKFIMEVNYEYSKDLFHYCIEREIPFIYASSAATYGGRNDNFIEDPKFEQPLNVYGYSKQLFDQYVRRWMPEINSQVVGLKYFNVYGPREQHKGSMASVAFHLNTQVKQGDNPKLFEGCDGFPDGGQMRDFIYVDDVCKVNLWFWQNPQHSGIFNCGTGRAEPFQNVAEAVIKHHQQGAIEYIPFPDHLKGRYQSFTQADMTRLRGVGYDGEFKTVAEGVADYMAWLNRA.

Residues 10 to 11 (FI), 31 to 32 (DD), Lys38, Lys53, and 79 to 83 (EGACS) each bind NADP(+). The Proton acceptor role is filled by Tyr144. An NADP(+)-binding site is contributed by Lys148. Asn173 is a substrate binding site. Val174 and Lys182 together coordinate NADP(+). The active-site Proton acceptor is the Lys182. Residues Ser184, His191, 205–208 (FEGC), Arg218, and Tyr282 each bind substrate.

This sequence belongs to the NAD(P)-dependent epimerase/dehydratase family. HldD subfamily. As to quaternary structure, homopentamer. Requires NADP(+) as cofactor.

The enzyme catalyses ADP-D-glycero-beta-D-manno-heptose = ADP-L-glycero-beta-D-manno-heptose. It functions in the pathway nucleotide-sugar biosynthesis; ADP-L-glycero-beta-D-manno-heptose biosynthesis; ADP-L-glycero-beta-D-manno-heptose from D-glycero-beta-D-manno-heptose 7-phosphate: step 4/4. In terms of biological role, catalyzes the interconversion between ADP-D-glycero-beta-D-manno-heptose and ADP-L-glycero-beta-D-manno-heptose via an epimerization at carbon 6 of the heptose. The sequence is that of ADP-L-glycero-D-manno-heptose-6-epimerase from Aeromonas salmonicida (strain A449).